Reading from the N-terminus, the 505-residue chain is Flagellin (505 aa).

This sequence belongs to the bacterial flagellin family.

The protein localises to the secreted. The protein resides in the bacterial flagellum. Functionally, flagellin is the subunit protein which polymerizes to form the filaments of bacterial flagella. In Salmonella enteritidis, this protein is Flagellin (fliC).